Consider the following 612-residue polypeptide: MSAELIAVYKDEQIIDLESAKVLGLSDGIKALNGTEPIYFDDSPLALEVIRHSCAHLLAQSLKALYPDAKFFVGPVVEEGFYYDFKTASKISEEDLPKIEAKMKEFAKSKLAITKETLTREQALERFKGDELKHAVMSKISGDIFGVYKQGEFEDLCKGPHLPNTRFLNHFKLTKLAGAYLGGDENNEMLIRIYGIAFATKEGLKDYLFQIEEAKKRDHRKLGVELGLFSFDDEIGAGLPLWLPKGARLRKRIEDLLSQALLLRGYEPVKGPEILKSDVWKISGHYDNYKENMYFTTIDEQEYGIKPMNCVGHIKVYQSALHSYRDLPLRFYEYGVVHRHEKSGVLHGLLRVREFTQDDAHIFCSFEQIQSEVSAILDFTHKIMQAFDFSYEMELSTRPAKSIGDDEVWEKATNALKEALKEHRIDYKIDEGGGAFYGPKIDIKITDALRRKWQCGTIQVDMNLPERFKLAFTNERNHAEQPVMIHRAILGSFERFIAILSEHFGGNFPFFVAPTQIALIPINEEHHVFALKLKEELKKRDIFVEVLDKNDSLNKKVRLAEKQKIPMILVLGNEEVETEILSIRDREKQAQYKMPLKEFLNMVESKMQEVSF.

The tract at residues 218–509 (DHRKLGVELG…LSEHFGGNFP (292 aa)) is catalytic. Zn(2+)-binding residues include C310, H361, and H486.

It belongs to the class-II aminoacyl-tRNA synthetase family. As to quaternary structure, homodimer. The cofactor is Zn(2+).

The protein resides in the cytoplasm. It carries out the reaction tRNA(Thr) + L-threonine + ATP = L-threonyl-tRNA(Thr) + AMP + diphosphate + H(+). Functionally, catalyzes the attachment of threonine to tRNA(Thr) in a two-step reaction: L-threonine is first activated by ATP to form Thr-AMP and then transferred to the acceptor end of tRNA(Thr). Also edits incorrectly charged L-seryl-tRNA(Thr). This is Threonine--tRNA ligase from Helicobacter pylori (strain HPAG1).